The following is a 300-amino-acid chain: MDKIFESLYKAGCDVRMFEKLSCHTSIKIGGRVKYLVLPNDVFSLERAITVLKDFPFQIMGLGTNLLVQDEDLDIAVLKTERLNQIEIKGEKVLVESGTPLKRLCLFLMEAELGGLEFAYGIPGSVGGAIFMNAGAYGGEIGEFIEAVEVLKDGRKIWLSKNEIFFGYRDSTFKREKLIITRAMMSFKKEKKETIKAKMEDYMRRRLEKQPLDLPSAGSVFKRPREDFYVGKAIESLGLKGYRIGGAQISEKHAGFIVNTGSATFDDVMKLIEFVRKKVKEKYGVELETEVEIWWNGRQW.

Positions 28 to 190 (KIGGRVKYLV…TRAMMSFKKE (163 aa)) constitute an FAD-binding PCMH-type domain. Arg-169 is an active-site residue. The active-site Proton donor is Ser-219. The active site involves Glu-290.

The protein belongs to the MurB family. Requires FAD as cofactor.

The protein resides in the cytoplasm. The enzyme catalyses UDP-N-acetyl-alpha-D-muramate + NADP(+) = UDP-N-acetyl-3-O-(1-carboxyvinyl)-alpha-D-glucosamine + NADPH + H(+). It participates in cell wall biogenesis; peptidoglycan biosynthesis. Functionally, cell wall formation. The polypeptide is UDP-N-acetylenolpyruvoylglucosamine reductase (Thermotoga sp. (strain RQ2)).